A 315-amino-acid chain; its full sequence is Thioredoxin reductase (315 aa).

An FAD-binding site is contributed by 45–52 (EGNTPGGK). A disulfide bond links C145 and C148. Residue 288 to 297 (DCRSKSFRQI) coordinates FAD.

Belongs to the class-II pyridine nucleotide-disulfide oxidoreductase family. As to quaternary structure, homodimer. It depends on FAD as a cofactor.

It localises to the cytoplasm. The catalysed reaction is [thioredoxin]-dithiol + NADP(+) = [thioredoxin]-disulfide + NADPH + H(+). The protein is Thioredoxin reductase (trxB) of Mycoplasma genitalium (strain ATCC 33530 / DSM 19775 / NCTC 10195 / G37) (Mycoplasmoides genitalium).